The chain runs to 728 residues: Catalase-peroxidase (728 aa).

Residues 91–218 constitute a cross-link (tryptophyl-tyrosyl-methioninium (Trp-Tyr) (with M-244)); the sequence is WHSAGTYRTA…LAAVQMGLIY (128 aa). Histidine 92 serves as the catalytic Proton acceptor. Positions 218 to 244 form a cross-link, tryptophyl-tyrosyl-methioninium (Tyr-Met) (with W-91); sequence YVNPEGPDGNPDPVAAARDIRDTFARM. Position 259 (histidine 259) interacts with heme b.

The protein belongs to the peroxidase family. Peroxidase/catalase subfamily. In terms of assembly, homodimer or homotetramer. It depends on heme b as a cofactor. Formation of the three residue Trp-Tyr-Met cross-link is important for the catalase, but not the peroxidase activity of the enzyme.

It catalyses the reaction H2O2 + AH2 = A + 2 H2O. It carries out the reaction 2 H2O2 = O2 + 2 H2O. Bifunctional enzyme with both catalase and broad-spectrum peroxidase activity. The polypeptide is Catalase-peroxidase (Burkholderia mallei (strain NCTC 10247)).